We begin with the raw amino-acid sequence, 122 residues long: UPF0102 protein Atu0303 (122 aa).

Belongs to the UPF0102 family.

This is UPF0102 protein Atu0303 from Agrobacterium fabrum (strain C58 / ATCC 33970) (Agrobacterium tumefaciens (strain C58)).